A 362-amino-acid polypeptide reads, in one-letter code: Epoxyqueuosine reductase (362 aa).

Residue Asp-143 is the Proton donor of the active site. A 4Fe-4S ferredoxin-type domain is found at 191 to 220 (PDSPKHQDSCGKCQACIKLCPTGAIQPGKM). [4Fe-4S] cluster is bound by residues Cys-200, Cys-203, Cys-206, Cys-210, Cys-226, Cys-253, Cys-256, and Cys-260.

Belongs to the QueG family. Monomer. Cob(II)alamin is required as a cofactor. It depends on [4Fe-4S] cluster as a cofactor.

The protein localises to the cytoplasm. The enzyme catalyses epoxyqueuosine(34) in tRNA + AH2 = queuosine(34) in tRNA + A + H2O. Its pathway is tRNA modification; tRNA-queuosine biosynthesis. Catalyzes the conversion of epoxyqueuosine (oQ) to queuosine (Q), which is a hypermodified base found in the wobble positions of tRNA(Asp), tRNA(Asn), tRNA(His) and tRNA(Tyr). This Francisella cf. novicida (strain Fx1) protein is Epoxyqueuosine reductase.